We begin with the raw amino-acid sequence, 216 residues long: Large ribosomal subunit protein uL3 (216 aa).

The residue at position 157 (Gln-157) is an N5-methylglutamine.

The protein belongs to the universal ribosomal protein uL3 family. As to quaternary structure, part of the 50S ribosomal subunit. Forms a cluster with proteins L14 and L19. Methylated by PrmB.

Functionally, one of the primary rRNA binding proteins, it binds directly near the 3'-end of the 23S rRNA, where it nucleates assembly of the 50S subunit. The protein is Large ribosomal subunit protein uL3 of Xanthomonas axonopodis pv. citri (strain 306).